Consider the following 299-residue polypeptide: Putative glycylpeptide N-tetradecanoyltransferase (299 aa).

It belongs to the NMT family.

It carries out the reaction N-terminal glycyl-[protein] + tetradecanoyl-CoA = N-tetradecanoylglycyl-[protein] + CoA + H(+). Functionally, adds a myristoyl group to the N-terminal glycine residue of certain proteins. This is Putative glycylpeptide N-tetradecanoyltransferase from Amsacta moorei entomopoxvirus (AmEPV).